A 452-amino-acid chain; its full sequence is UPF0210 protein Daud_1353 (452 aa).

This sequence belongs to the UPF0210 family. Homodimer.

The protein is UPF0210 protein Daud_1353 of Desulforudis audaxviator (strain MP104C).